A 128-amino-acid polypeptide reads, in one-letter code: UPF0102 protein PSPTO_4420 (128 aa).

It belongs to the UPF0102 family.

The protein is UPF0102 protein PSPTO_4420 of Pseudomonas syringae pv. tomato (strain ATCC BAA-871 / DC3000).